Consider the following 164-residue polypeptide: Single-stranded DNA-binding protein 2 (164 aa).

In terms of domain architecture, SSB spans 5-109 (INKVILVGNL…IVADEMQMLG (105 aa)). The tract at residues 105-164 (MQMLGGRSDGGGMGGGGERPQRQTSQRQDYAPRRQARQPSQSPQSSPPPMDDFADDDIPF) is disordered. Gly residues predominate over residues 111 to 122 (RSDGGGMGGGGE). The short motif at 159-164 (DDDIPF) is the Important for interaction with partner proteins element.

Homotetramer.

Functionally, plays an important role in DNA replication, recombination and repair. Binds to ssDNA and to an array of partner proteins to recruit them to their sites of action during DNA metabolism. The chain is Single-stranded DNA-binding protein 2 (ssb2) from Xylella fastidiosa (strain 9a5c).